Reading from the N-terminus, the 746-residue chain is MQFSRFIPRSSPGLPPYGAHDPPMMQNPAPTTAPPGAITPYLGFKARLSQIWINKWTILLLLVLARVLIAVTGLNDNMASAKREALSACTSVESMGSAMASMPHYMSKGVNELTASGVERAVNGLMSMLLLTVTGVEEVVVFFVNVLTQTYLCLITLAVSGSLHVALKVVEDAADFLNKTLADVTEGIEKGVDGFEDKINDFLKGINSITSAFGGEKDPPKLDIGGDLDKLKEIRLPSSLDEGLKKINDSIPTFDEVNKFANDAIRYPFKEVKKLINQSLEEYKFDRSVFPVPQKEKLSFCGDNDGINSFFGKIGSIISTAKKIFIAVLIAGAVAACVPMALLEIRRWRHMKERASLVQKNDHDPMDVVYIVSRPYTSTAGLKIASWFKPGRRQVLVRWIVAYATTTPALFLLALGIAGLFSCACQAILLHAVKKEVPGLTNEVSQFADKVVMSLNNASEQWAISTNRVIADTNDDINQKVFGWVNTSTTSINDTLNVFVDKTSDVLNDTFGGTILHGPIKDVLYCLIGLKIQGIQKALTWVYDHAHVDFPNMPNDTFSLGAVESIANDNKSDPESFLASPGDKTADAITHVVVRVTEAIENAIRTEALISTFLIALWFAILLIAVLRALTLAFRRDKPRGEGGIDATYHPPAPRAAHAVGSMEMSDFYNVPLTGVPNANGDGGLAPKYSTTPHVRGGSRGSDTDEEEYQAQKLGYAGQRDYEAALNREMCRESSCGQVMYGSEKR.

A disordered region spans residues 1-32; the sequence is MQFSRFIPRSSPGLPPYGAHDPPMMQNPAPTT. Residues 1–50 lie on the Extracellular side of the membrane; it reads MQFSRFIPRSSPGLPPYGAHDPPMMQNPAPTTAPPGAITPYLGFKARLSQ. A helical transmembrane segment spans residues 51-71; it reads IWINKWTILLLLVLARVLIAV. Residues 72–138 are Cytoplasmic-facing; it reads TGLNDNMASA…LLLTVTGVEE (67 aa). A helical transmembrane segment spans residues 139-159; the sequence is VVVFFVNVLTQTYLCLITLAV. Topologically, residues 160-323 are extracellular; it reads SGSLHVALKV…IGSIISTAKK (164 aa). N-linked (GlcNAc...) asparagine glycosylation is found at asparagine 178, asparagine 248, and asparagine 277. A helical membrane pass occupies residues 324–344; that stretch reads IFIAVLIAGAVAACVPMALLE. The Cytoplasmic portion of the chain corresponds to 345–398; sequence IRRWRHMKERASLVQKNDHDPMDVVYIVSRPYTSTAGLKIASWFKPGRRQVLVR. The chain crosses the membrane as a helical span at residues 399 to 421; it reads WIVAYATTTPALFLLALGIAGLF. Residues 422–606 are Extracellular-facing; that stretch reads SCACQAILLH…TEAIENAIRT (185 aa). N-linked (GlcNAc...) asparagine glycosylation is found at asparagine 457, asparagine 486, asparagine 493, asparagine 508, asparagine 555, and asparagine 570. Residues 607–627 traverse the membrane as a helical segment; that stretch reads EALISTFLIALWFAILLIAVL. The Cytoplasmic segment spans residues 628-746; it reads RALTLAFRRD…GQVMYGSEKR (119 aa). The interval 682 to 708 is disordered; that stretch reads DGGLAPKYSTTPHVRGGSRGSDTDEEE.

Belongs to the PRM1 family.

It localises to the cell membrane. Functionally, involved in cell fusion during mating by stabilizing the plasma membrane fusion event. This is Plasma membrane fusion protein PRM1 (PRM1) from Coccidioides immitis (strain RS) (Valley fever fungus).